Consider the following 283-residue polypeptide: Protein FAM170A (283 aa).

Disordered regions lie at residues 1–54 and 123–171; these read MKRR…RSQH and GTPP…AKTP. The segment covering 127–138 has biased composition (polar residues); it reads SDVSTRNLLSDS. Basic and acidic residues predominate over residues 142–153; it reads GEEKEHEERTES. A Phosphothreonine modification is found at Thr-170. The segment at 181 to 205 adopts a C2H2-type; degenerate zinc-finger fold; the sequence is FRCMACCRVFTTMEALQEHVQFGIR. A disordered region spans residues 223-283; sequence NMESESTQDE…VFHSPKDRNS (61 aa). Residues 228–246 are compositionally biased toward acidic residues; sequence STQDEQEEENGNEKEEEEK. At Ser-268 the chain carries Phosphoserine.

This sequence belongs to the FAM170 family.

It is found in the nucleus. Acts as a nuclear transcription factor that positively regulates the expression of heat shock genes. Binds to heat shock promoter elements (HSE). The sequence is that of Protein FAM170A (FAM170A) from Macaca fascicularis (Crab-eating macaque).